The primary structure comprises 581 residues: ATP-dependent lipid A-core flippase (581 aa).

5 consecutive transmembrane segments (helical) span residues 27 to 47 (VFLA…FPAI), 63 to 83 (MVWL…VIVY), 154 to 174 (IALI…TLAI), 251 to 271 (MTPI…FLAL), and 279 to 299 (GASA…ISPV). The region spanning 28 to 311 (FLAVIGMVGT…LATVNPTIQR (284 aa)) is the ABC transmembrane type-1 domain. Residues 343-579 (ICFDNVSLRY…GSYYANLSRL (237 aa)) enclose the ABC transporter domain. Residue 377–384 (GASGGGKS) coordinates ATP.

The protein belongs to the ABC transporter superfamily. Lipid exporter (TC 3.A.1.106) family. As to quaternary structure, homodimer.

The protein localises to the cell inner membrane. It catalyses the reaction ATP + H2O + lipid A-core oligosaccharideSide 1 = ADP + phosphate + lipid A-core oligosaccharideSide 2.. Functionally, involved in lipopolysaccharide (LPS) biosynthesis. Translocates lipid A-core from the inner to the outer leaflet of the inner membrane. Transmembrane domains (TMD) form a pore in the inner membrane and the ATP-binding domain (NBD) is responsible for energy generation. The sequence is that of ATP-dependent lipid A-core flippase from Albidiferax ferrireducens (strain ATCC BAA-621 / DSM 15236 / T118) (Rhodoferax ferrireducens).